The chain runs to 219 residues: 23.6 kDa heat shock protein, mitochondrial (219 aa).

The N-terminal 29 residues, 1-29, are a transit peptide targeting the mitochondrion; sequence MALARQCLSKRLAAGCALARPLHAASPVA. One can recognise a sHSP domain in the interval 104-219; sequence QVAETLTRPL…KRSVTEVKVR (116 aa).

Belongs to the small heat shock protein (HSP20) family. May form oligomeric structures.

It localises to the mitochondrion. The polypeptide is 23.6 kDa heat shock protein, mitochondrial (HSP23.6) (Oryza sativa subsp. japonica (Rice)).